A 329-amino-acid polypeptide reads, in one-letter code: Porphobilinogen deaminase (329 aa).

Cys250 bears the S-(dipyrrolylmethanemethyl)cysteine mark.

Belongs to the HMBS family. As to quaternary structure, monomer. Dipyrromethane is required as a cofactor.

The catalysed reaction is 4 porphobilinogen + H2O = hydroxymethylbilane + 4 NH4(+). It functions in the pathway porphyrin-containing compound metabolism; protoporphyrin-IX biosynthesis; coproporphyrinogen-III from 5-aminolevulinate: step 2/4. Tetrapolymerization of the monopyrrole PBG into the hydroxymethylbilane pre-uroporphyrinogen in several discrete steps. This is Porphobilinogen deaminase from Burkholderia thailandensis (strain ATCC 700388 / DSM 13276 / CCUG 48851 / CIP 106301 / E264).